A 365-amino-acid polypeptide reads, in one-letter code: Histidinol-phosphate aminotransferase 2 (365 aa).

The residue at position 222 (K222) is an N6-(pyridoxal phosphate)lysine.

It belongs to the class-II pyridoxal-phosphate-dependent aminotransferase family. Histidinol-phosphate aminotransferase subfamily. Homodimer. Requires pyridoxal 5'-phosphate as cofactor.

The enzyme catalyses L-histidinol phosphate + 2-oxoglutarate = 3-(imidazol-4-yl)-2-oxopropyl phosphate + L-glutamate. It participates in amino-acid biosynthesis; L-histidine biosynthesis; L-histidine from 5-phospho-alpha-D-ribose 1-diphosphate: step 7/9. This is Histidinol-phosphate aminotransferase 2 (hisC2) from Bordetella bronchiseptica (strain ATCC BAA-588 / NCTC 13252 / RB50) (Alcaligenes bronchisepticus).